The chain runs to 270 residues: G-box-binding factor 4 (270 aa).

Residues 1 to 46 (MASFKLMSSSNSDLSRRNSSSASSSPSIRSSHHLRPNPHADHSRIS) are disordered. The segment covering 8–29 (SSSNSDLSRRNSSSASSSPSIR) has biased composition (low complexity). Ser-27 is modified (phosphoserine). Residues 187–250 (AAQRQKRMIK…YKKLMEVLIP (64 aa)) form the bZIP domain. A basic motif region spans residues 190–208 (RQKRMIKNRESAARSRERK). The interval 215–229 (LETLAAKLEEENEQL) is leucine-zipper. Positions 250–270 (PVDEKPRPPSRPLSRSHSLEW) are disordered. Residues 261-270 (PLSRSHSLEW) show a composition bias toward low complexity.

It belongs to the bZIP family. In terms of assembly, DNA-binding heterodimer with GBF2 and GBF3; non DNA-binding homodimer.

It is found in the nucleus. Its function is as follows. Binds to the G-box motif (5'-CCACGTGG-3') of the rbcS-1A gene promoter. G-box and G-box-like motifs are cis-acting elements defined in promoters of certain plant genes which are regulated by such diverse stimuli as light-induction or hormone control. The protein is G-box-binding factor 4 (GBF4) of Arabidopsis thaliana (Mouse-ear cress).